The following is a 299-amino-acid chain: Transcription elongation factor A protein 2 (299 aa).

The region spanning 5–82 (EEIARIARRL…KSWKKLLDVS (78 aa)) is the TFIIS N-terminal domain. Lys57 is covalently cross-linked (Glycyl lysine isopeptide (Lys-Gly) (interchain with G-Cter in ubiquitin)). Residues Ser59 and Ser100 each carry the phosphoserine modification. Positions 82–127 (SDGKSRNQGRGTPLPTSSSKDASRTTDLSCKKPDPPRTPSTPRITT) are disordered. The segment covering 87–101 (RNQGRGTPLPTSSSK) has biased composition (polar residues). Basic and acidic residues predominate over residues 102–116 (DASRTTDLSCKKPDP). Residues 138–254 (VRNKCREMLT…EHQMARTGGT (117 aa)) form the TFIIS central domain. The TFIIS-type zinc finger occupies 257–297 (DLFTCNKCRKKNCTYTQVQTRSSDEPMTTYVVCNECGNRWK). Positions 261, 264, 289, and 292 each coordinate Zn(2+).

Belongs to the TFS-II family. Interacts with the basal transcription factor GTF2B. Interacts with REXO1. In terms of tissue distribution, testis and ovary specific. Specific to testicular germ cells.

It is found in the nucleus. In terms of biological role, necessary for efficient RNA polymerase II transcription elongation past template-encoded arresting sites. The arresting sites in DNA have the property of trapping a certain fraction of elongating RNA polymerases that pass through, resulting in locked ternary complexes. Cleavage of the nascent transcript by S-II allows the resumption of elongation from the new 3'-terminus. The polypeptide is Transcription elongation factor A protein 2 (Tcea2) (Mus musculus (Mouse)).